The sequence spans 418 residues: Alpha-tubulin N-acetyltransferase 1 (418 aa).

Residues 1–186 (MEFEFDVHKI…NNFVVFEGFF (186 aa)) form the N-acetyltransferase domain. Acetyl-CoA contacts are provided by residues 120–133 (FYIHESLQRHGFGK) and 156–165 (SEKFLSFLRK). 2 disordered regions span residues 237–292 (SSLG…MNLS) and 322–353 (QIKEQQSRTDSSAQEGRTQDRPNGSNSQHQND). A compositionally biased stretch (basic and acidic residues) spans 277-287 (QEDHSQRRRTS). A compositionally biased stretch (polar residues) spans 329 to 353 (RTDSSAQEGRTQDRPNGSNSQHQND).

The protein belongs to the acetyltransferase ATAT1 family.

The protein localises to the cytoplasm. The protein resides in the membrane. Its subcellular location is the clathrin-coated pit. It localises to the cell junction. It is found in the focal adhesion. The protein localises to the cell projection. The protein resides in the axon. Its subcellular location is the cytoskeleton. It localises to the spindle. The catalysed reaction is L-lysyl-[alpha-tubulin] + acetyl-CoA = N(6)-acetyl-L-lysyl-[alpha-tubulin] + CoA + H(+). Functionally, specifically acetylates 'Lys-40' in alpha-tubulin on the lumenal side of microtubules. Promotes microtubule destabilization and accelerates microtubule dynamics; this activity may be independent of acetylation activity. Acetylates alpha-tubulin with a slow enzymatic rate, due to a catalytic site that is not optimized for acetyl transfer. Enters the microtubule through each end and diffuses quickly throughout the lumen of microtubules. Acetylates only long/old microtubules because of its slow acetylation rate since it does not have time to act on dynamically unstable microtubules before the enzyme is released. May be involved in neuron development. This Xenopus laevis (African clawed frog) protein is Alpha-tubulin N-acetyltransferase 1.